The primary structure comprises 180 residues: Beta-lactoglobulin-1/B (180 aa).

Positions 1–18 (MKCLLLALGLALACGVQA) are cleaved as a signal peptide. Cystine bridges form between C84/C178, C124/C137, and C124/C139.

This sequence belongs to the calycin superfamily. Lipocalin family. As to quaternary structure, under physiological conditions beta-lactoglobulin exists as an equilibrium mixture of monomeric and dimeric forms. Post-translationally, alternate disulfide bonds occur in equal amounts.

The protein resides in the secreted. Its function is as follows. Lactoglobulin is the primary component of whey, it binds retinol and is probably involved in the transport of that molecule. The chain is Beta-lactoglobulin-1/B from Ovis aries (Sheep).